A 60-amino-acid polypeptide reads, in one-letter code: Cytochrome c oxidase subunit 7, mitochondrial (60 aa).

Topologically, residues 2-29 are mitochondrial matrix; sequence ANKVIQLQKIFQSSTKPLWWRHPRSALY. A helical membrane pass occupies residues 30–53; sequence LYPFYAIFAVAVVTPLLYIPNAIR. At 54 to 60 the chain is on the mitochondrial intermembrane side; it reads GIKAKKA.

Belongs to the cytochrome c oxidase VIIa family. As to quaternary structure, component of the cytochrome c oxidase (complex IV, CIV), a multisubunit enzyme composed of 12 subunits. The complex is composed of a catalytic core of 3 subunits COX1, COX2 and COX3, encoded in the mitochondrial DNA, and 9 supernumerary subunits COX4, COX5A (or COX5B), COX6, COX7, COX8, COX9, COX12, COX13 and COX26, which are encoded in the nuclear genome. The complex exists as a monomer or a dimer and forms supercomplexes (SCs) in the inner mitochondrial membrane with a dimer of ubiquinol-cytochrome c oxidoreductase (cytochrome b-c1 complex, complex III, CIII), resulting in 2 different assemblies (supercomplexes III(2)IV and III(2)IV(2)).

It is found in the mitochondrion inner membrane. Its pathway is energy metabolism; oxidative phosphorylation. Functionally, component of the cytochrome c oxidase, the last enzyme in the mitochondrial electron transport chain which drives oxidative phosphorylation. The respiratory chain contains 3 multisubunit complexes succinate dehydrogenase (complex II, CII), ubiquinol-cytochrome c oxidoreductase (cytochrome b-c1 complex, complex III, CIII) and cytochrome c oxidase (complex IV, CIV), that cooperate to transfer electrons derived from NADH and succinate to molecular oxygen, creating an electrochemical gradient over the inner membrane that drives transmembrane transport and the ATP synthase. Cytochrome c oxidase is the component of the respiratory chain that catalyzes the reduction of oxygen to water. Electrons originating from reduced cytochrome c in the intermembrane space (IMS) are transferred via the dinuclear copper A center (CU(A)) of COX2 and heme A of COX1 to the active site in COX1, a binuclear center (BNC) formed by heme A3 and copper B (CU(B)). The BNC reduces molecular oxygen to 2 water molecules using 4 electrons from cytochrome c in the IMS and 4 protons from the mitochondrial matrix. The sequence is that of Cytochrome c oxidase subunit 7, mitochondrial (COX7) from Saccharomyces cerevisiae (strain ATCC 204508 / S288c) (Baker's yeast).